The primary structure comprises 312 residues: D-alanine--D-alanine ligase (312 aa).

An ATP-grasp domain is found at 103-303 (KQQLVPHGIR…YADLVQAIVD (201 aa)). 130 to 186 (MPRPYVLKPVNEGSSVGVAIIKERDNHGVPIHRDSHGPWQTFATLLAEPFIRGRELT) is an ATP binding site. Mg(2+) contacts are provided by Asp254, Glu270, and Asn272.

This sequence belongs to the D-alanine--D-alanine ligase family. Mg(2+) is required as a cofactor. The cofactor is Mn(2+).

It is found in the cytoplasm. It carries out the reaction 2 D-alanine + ATP = D-alanyl-D-alanine + ADP + phosphate + H(+). It participates in cell wall biogenesis; peptidoglycan biosynthesis. Its function is as follows. Cell wall formation. This chain is D-alanine--D-alanine ligase, found in Rhizorhabdus wittichii (strain DSM 6014 / CCUG 31198 / JCM 15750 / NBRC 105917 / EY 4224 / RW1) (Sphingomonas wittichii).